Consider the following 100-residue polypeptide: NAD(P)H-quinone oxidoreductase subunit 4L, chloroplastic (100 aa).

3 consecutive transmembrane segments (helical) span residues 1–21, 30–50, and 60–80; these read MLENSLILGAYLFCLGIYGLT, LMCLELMLNGVNINLVAFSSF, and VFAIFIIAIAAAEAAIGLAII.

The protein belongs to the complex I subunit 4L family. As to quaternary structure, NDH is composed of at least 16 different subunits, 5 of which are encoded in the nucleus.

It localises to the plastid. It is found in the chloroplast thylakoid membrane. The catalysed reaction is a plastoquinone + NADH + (n+1) H(+)(in) = a plastoquinol + NAD(+) + n H(+)(out). The enzyme catalyses a plastoquinone + NADPH + (n+1) H(+)(in) = a plastoquinol + NADP(+) + n H(+)(out). NDH shuttles electrons from NAD(P)H:plastoquinone, via FMN and iron-sulfur (Fe-S) centers, to quinones in the photosynthetic chain and possibly in a chloroplast respiratory chain. The immediate electron acceptor for the enzyme in this species is believed to be plastoquinone. Couples the redox reaction to proton translocation, and thus conserves the redox energy in a proton gradient. The sequence is that of NAD(P)H-quinone oxidoreductase subunit 4L, chloroplastic from Staurastrum punctulatum (Green alga).